We begin with the raw amino-acid sequence, 49 residues long: Protein OPG059 (49 aa).

Met-1 is a topological domain (virion surface). The chain crosses the membrane as a helical span at residues 2 to 22; that stretch reads VIGLVIFVSVAAAIVGVLSNV. Residues 23 to 49 lie on the Intravirion side of the membrane; it reads LDMLMYVEENNEEDARIKEEQELLLLY.

This sequence belongs to the orthopoxvirus OPG058 family.

Its subcellular location is the virion membrane. The protein resides in the host membrane. In terms of biological role, may play a role in cell adhesion and is important for virus virulence in vivo, although it is not required for the virus life cycle in cell cultures. The sequence is that of Protein OPG059 (OPG059) from Vaccinia virus (strain Western Reserve) (VACV).